Consider the following 483-residue polypeptide: Serine/threonine-protein phosphatase 2A regulatory subunit phr2AB (483 aa).

WD repeat units follow at residues 22 to 61 (SDANVVPAIEFDQTGDFIAVGDKGGKVLLLKRTHDKQSSK) and 88 to 129 (EIEE…IKQV). Residues 132–152 (SATTTGPSYNGSLASNNTRSP) form a disordered region. 4 WD repeats span residues 206-244 (AHAYHINSISLNSDGETYISSDDLRIHLWNLNINTECFN), 255-295 (DLTE…LCDN), 314-352 (EIISSISDIKFSRDGRYILSRDFLTLKLWDINMENKPVK), and 369-410 (ENDC…DVCL). Residues 421-443 (TKTLTTKMKLRSSKKEPKKPEDI) form a disordered region. Over residues 433–443 (SKKEPKKPEDI) the composition is skewed to basic and acidic residues. The stretch at 449–483 (EYTKKTLHCAWHPKDNLIAVGAANTVYLYAATENK) is one WD 7 repeat.

The protein belongs to the phosphatase 2A regulatory subunit B family. As to quaternary structure, PP2A consists of a trimeric holoenzyme, composed of a 37 kDa catalytic subunit (C subunit) and a 65 kDa constant regulatory subunit (A subunit), that associates with a variety of regulatory subunits (B subunit) such as phr2AB (B55) and psrA (B56 homolog). The trimer may partially dissociates into a core 'AC' dimer equally active compared to the trimer.

It localises to the cytoplasm. The protein localises to the cytosol. The protein resides in the cytoskeleton. Its subcellular location is the microtubule organizing center. It is found in the centrosome. The B regulatory subunit might modulate substrate selectivity and catalytic activity, and might also direct the localization of the catalytic enzyme to a particular subcellular compartment. The polypeptide is Serine/threonine-protein phosphatase 2A regulatory subunit phr2AB (phr2aB) (Dictyostelium discoideum (Social amoeba)).